The sequence spans 192 residues: Hydrophobin-like protein rodD (192 aa).

Intrachain disulfides connect Cys-45–Cys-106, Cys-50–Cys-99, and Cys-107–Cys-112.

The protein belongs to the fungal hydrophobin family. In terms of assembly, self-assembles to form functional amyloid fibrils called rodlets. Self-assembly into fibrillar rodlets occurs spontaneously at hydrophobic:hydrophilic interfaces and the rodlets further associate laterally to form amphipathic monolayers.

Aerial growth, conidiation, and dispersal of filamentous fungi in the environment rely upon a capability of their secreting small amphipathic proteins called hydrophobins (HPBs) with low sequence identity. Class I can self-assemble into an outermost layer of rodlet bundles on aerial cell surfaces, conferring cellular hydrophobicity that supports fungal growth, development and dispersal; whereas Class II form highly ordered films at water-air interfaces through intermolecular interactions but contribute nothing to the rodlet structure. RodD is a an hydrophobin-like protein that, unlike rodA, is not required for rodlet formation. This is Hydrophobin-like protein rodD from Aspergillus fumigatus (strain ATCC MYA-4609 / CBS 101355 / FGSC A1100 / Af293) (Neosartorya fumigata).